A 115-amino-acid chain; its full sequence is UPF0145 protein lp_2083 (115 aa).

Belongs to the UPF0145 family.

This Lactiplantibacillus plantarum (strain ATCC BAA-793 / NCIMB 8826 / WCFS1) (Lactobacillus plantarum) protein is UPF0145 protein lp_2083.